We begin with the raw amino-acid sequence, 199 residues long: Prolactin (199 aa).

Cys-4 and Cys-11 are oxidised to a cystine. Ser-26 is modified (phosphoserine). N-linked (GlcNAc...) asparagine; partial glycosylation is present at Asn-31. Phosphoserine occurs at positions 34 and 90. 2 cysteine pairs are disulfide-bonded: Cys-58–Cys-174 and Cys-191–Cys-199.

This sequence belongs to the somatotropin/prolactin family. As to quaternary structure, interacts with PRLR.

Its subcellular location is the secreted. Its function is as follows. Prolactin acts primarily on the mammary gland by promoting lactation. This chain is Prolactin (PRL), found in Camelus dromedarius (Dromedary).